The primary structure comprises 174 residues: Shikimate kinase (174 aa).

Residue 10–15 (GSGKTA) coordinates ATP. A Mg(2+)-binding site is contributed by threonine 14. Positions 32, 56, and 78 each coordinate substrate. Arginine 118 is an ATP binding site. Arginine 137 serves as a coordination point for substrate. Arginine 154 provides a ligand contact to ATP.

It belongs to the shikimate kinase family. In terms of assembly, monomer. Requires Mg(2+) as cofactor.

The protein localises to the cytoplasm. The catalysed reaction is shikimate + ATP = 3-phosphoshikimate + ADP + H(+). The protein operates within metabolic intermediate biosynthesis; chorismate biosynthesis; chorismate from D-erythrose 4-phosphate and phosphoenolpyruvate: step 5/7. Catalyzes the specific phosphorylation of the 3-hydroxyl group of shikimic acid using ATP as a cosubstrate. The protein is Shikimate kinase of Symbiobacterium thermophilum (strain DSM 24528 / JCM 14929 / IAM 14863 / T).